A 193-amino-acid polypeptide reads, in one-letter code: Peptidyl-tRNA hydrolase (193 aa).

Tyr15 is a binding site for tRNA. The active-site Proton acceptor is the His20. TRNA-binding residues include Phe65, Asn67, and Asn113.

Belongs to the PTH family. Monomer.

The protein localises to the cytoplasm. The enzyme catalyses an N-acyl-L-alpha-aminoacyl-tRNA + H2O = an N-acyl-L-amino acid + a tRNA + H(+). In terms of biological role, hydrolyzes ribosome-free peptidyl-tRNAs (with 1 or more amino acids incorporated), which drop off the ribosome during protein synthesis, or as a result of ribosome stalling. Its function is as follows. Catalyzes the release of premature peptidyl moieties from peptidyl-tRNA molecules trapped in stalled 50S ribosomal subunits, and thus maintains levels of free tRNAs and 50S ribosomes. The chain is Peptidyl-tRNA hydrolase from Ehrlichia canis (strain Jake).